Consider the following 192-residue polypeptide: Phosphoheptose isomerase (192 aa).

In terms of domain architecture, SIS spans 37-192; that stretch reads LADSFKAGGK…IQLIEKEMEK (156 aa). Residue 52-54 coordinates substrate; the sequence is NGG. H61 and E65 together coordinate Zn(2+). Substrate is bound by residues E65, 93–94, 119–121, S124, and Q172; these read ND and STS. Q172 and H180 together coordinate Zn(2+).

Belongs to the SIS family. GmhA subfamily. Homotetramer. Zn(2+) is required as a cofactor.

The protein localises to the cytoplasm. The enzyme catalyses 2 D-sedoheptulose 7-phosphate = D-glycero-alpha-D-manno-heptose 7-phosphate + D-glycero-beta-D-manno-heptose 7-phosphate. It participates in carbohydrate biosynthesis; D-glycero-D-manno-heptose 7-phosphate biosynthesis; D-glycero-alpha-D-manno-heptose 7-phosphate and D-glycero-beta-D-manno-heptose 7-phosphate from sedoheptulose 7-phosphate: step 1/1. Its function is as follows. Catalyzes the isomerization of sedoheptulose 7-phosphate in D-glycero-D-manno-heptose 7-phosphate. This chain is Phosphoheptose isomerase, found in Proteus mirabilis (strain HI4320).